We begin with the raw amino-acid sequence, 1137 residues long: Eukaryotic translation initiation factor 3 subunit A (1137 aa).

Positions 319 to 501 (LQRMAAHVLL…NSIYFGTDLT (183 aa)) constitute a PCI domain. Composition is skewed to basic and acidic residues over residues 588–623 (QNNAREEEEARRQEEESRKAKLAEQKRLEQEQEERE) and 829–899 (AAEE…RGGD). Disordered stretches follow at residues 588 to 631 (QNNA…QNEI) and 829 to 1137 (AAEE…VKRR). Ser-908 bears the Phosphoserine mark. Composition is skewed to basic and acidic residues over residues 922 to 971 (RGIE…EPDS), 985 to 1046 (SRDE…EPQR), 1054 to 1083 (DAPRHADRENRRTAGGERRDRDVRETRGDQ), and 1106 to 1127 (AREEKPATKRDQPQEKENKAAD).

It belongs to the eIF-3 subunit A family. As to quaternary structure, component of the eukaryotic translation initiation factor 3 (eIF-3) complex. The eIF-3 complex interacts with pix.

Its subcellular location is the cytoplasm. Its function is as follows. RNA-binding component of the eukaryotic translation initiation factor 3 (eIF-3) complex, which is involved in protein synthesis of a specialized repertoire of mRNAs and, together with other initiation factors, stimulates binding of mRNA and methionyl-tRNAi to the 40S ribosome. The eIF-3 complex specifically targets and initiates translation of a subset of mRNAs involved in cell proliferation. This is Eukaryotic translation initiation factor 3 subunit A from Drosophila yakuba (Fruit fly).